The following is a 190-amino-acid chain: Peptide deformylase (190 aa).

Residues cysteine 94 and histidine 136 each contribute to the Fe cation site. Glutamate 137 is an active-site residue. A Fe cation-binding site is contributed by histidine 140.

This sequence belongs to the polypeptide deformylase family. Fe(2+) serves as cofactor.

It carries out the reaction N-terminal N-formyl-L-methionyl-[peptide] + H2O = N-terminal L-methionyl-[peptide] + formate. In terms of biological role, removes the formyl group from the N-terminal Met of newly synthesized proteins. Requires at least a dipeptide for an efficient rate of reaction. N-terminal L-methionine is a prerequisite for activity but the enzyme has broad specificity at other positions. In Chlorobium phaeovibrioides (strain DSM 265 / 1930) (Prosthecochloris vibrioformis (strain DSM 265)), this protein is Peptide deformylase.